The primary structure comprises 530 residues: 26S proteasome non-ATPase regulatory subunit 3 (530 aa).

The span at 1–16 shows a compositional bias: basic and acidic residues; that stretch reads MKQEGSARRRGADKAK. Residues 1–65 are disordered; the sequence is MKQEGSARRR…TEHSQRELDT (65 aa). Positions 17–30 are enriched in pro residues; sequence PPPGGEQEPPPPAP. A Glycyl lysine isopeptide (Lys-Gly) (interchain with G-Cter in SUMO1); alternate cross-link involves residue Lys-36. Lys-36 is covalently cross-linked (Glycyl lysine isopeptide (Lys-Gly) (interchain with G-Cter in SUMO2); alternate). The 180-residue stretch at 282–461 folds into the PCI domain; the sequence is ARYLYYTGRI…GYVQSKEMID (180 aa). Phosphoserine is present on residues Ser-414 and Ser-426. The interval 496–530 is disordered; that stretch reads SYNKDLESAEERREREQQDLEFAKEMAEDDDDSFP. Positions 497-521 are enriched in basic and acidic residues; it reads YNKDLESAEERREREQQDLEFAKEM.

It belongs to the proteasome subunit S3 family. As to quaternary structure, component of the 19S proteasome regulatory particle complex. The 26S proteasome consists of a 20S core particle (CP) and two 19S regulatory subunits (RP). The regulatory particle is made of a lid composed of 9 subunits including PSMD3, a base containing 6 ATPases and few additional components. Interacts with UBQLN1 (via ubiquitin-like domain). Interacts with ERCC6.

Its function is as follows. Component of the 26S proteasome, a multiprotein complex involved in the ATP-dependent degradation of ubiquitinated proteins. This complex plays a key role in the maintenance of protein homeostasis by removing misfolded or damaged proteins, which could impair cellular functions, and by removing proteins whose functions are no longer required. Therefore, the proteasome participates in numerous cellular processes, including cell cycle progression, apoptosis, or DNA damage repair. The sequence is that of 26S proteasome non-ATPase regulatory subunit 3 (Psmd3) from Mus musculus (Mouse).